Reading from the N-terminus, the 595-residue chain is MRVLLAALGLLFLGALRAFPQDRPFEDTCHGNPSHYYDKAVRRCCYRCPMGLFPTQQCPQRPTDCRKQCEPDYYLDEADRCTACVTCSRDDLVEKTPCAWNSSRVCECRPGMFCSTSAVNSCARCFFHSVCPAGMIVKFPGTAQKNTVCEPASPGVSPACASPENCKEPSSGTIPQAKPTPVSPATSSASTMPVRGGTRLAQEAASKLTRAPDSPSSVGRPSSDPGLSPTQPCPEGSGDCRKQCEPDYYLDEAGRCTACVSCSRDDLVEKTPCAWNSSRTCECRPGMICATSATNSCARCVPYPICAAETVTKPQDMAEKDTTFEAPPLGTQPDCNPTPENGEAPASTSPTQSLLVDSQASKTLPIPTSAPVALSSTGKPVLDAGPVLFWVILVLVVVVGSSAFLLCHRRACRKRIRQKLHLCYPVQTSQPKLELVDSRPRRSSTQLRSGASVTEPVAEERGLMSQPLMETCHSVGAAYLESLPLQDASPAGGPSSPRDLPEPRVSTEHTNNKIEKIYIMKADTVIVGTVKAELPEGRGLAGPAEPELEEELEADHTPHYPEQETEPPLGSCSDVMLSVEEEGKEDPLPTAASGK.

Residues 1–18 form the signal peptide; it reads MRVLLAALGLLFLGALRA. The Extracellular portion of the chain corresponds to 19–385; the sequence is FPQDRPFEDT…STGKPVLDAG (367 aa). 3 TNFR-Cys repeats span residues 28–66, 68–106, and 107–150; these read TCHGNPSHYYDKAVRRCCYRCPMGLFPTQQCPQRPTDCR, QCEPDYYLDEADRCTACVTCSRDDLVEKTPCAWNSSRVC, and ECRP…TVCE. 8 disulfides stabilise this stretch: cysteine 29/cysteine 44, cysteine 45/cysteine 58, cysteine 48/cysteine 65, cysteine 69/cysteine 81, cysteine 84/cysteine 98, cysteine 87/cysteine 106, cysteine 108/cysteine 122, and cysteine 131/cysteine 149. Residue asparagine 32 is glycosylated (N-linked (GlcNAc...) asparagine). Asparagine 101 carries an N-linked (GlcNAc...) asparagine glycan. The segment at 167–238 is disordered; that stretch reads KEPSSGTIPQ…PTQPCPEGSG (72 aa). Positions 179–194 are enriched in low complexity; that stretch reads PTPVSPATSSASTMPV. TNFR-Cys repeat units lie at residues 205 to 241, 243 to 281, and 282 to 325; these read ASKLTRAPDSPSSVGRPSSDPGLSPTQPCPEGSGDCR, QCEPDYYLDEAGRCTACVSCSRDDLVEKTPCAWNSSRTC, and ECRP…TTFE. 6 disulfides stabilise this stretch: cysteine 233–cysteine 240, cysteine 244–cysteine 256, cysteine 259–cysteine 273, cysteine 262–cysteine 281, cysteine 283–cysteine 297, and cysteine 289–cysteine 300. A glycan (N-linked (GlcNAc...) asparagine) is linked at asparagine 276. Positions 323 to 355 are disordered; that stretch reads TFEAPPLGTQPDCNPTPENGEAPASTSPTQSLL. The N-linked (GlcNAc...) asparagine glycan is linked to asparagine 336. The segment covering 346 to 355 has biased composition (polar residues); sequence ASTSPTQSLL. A helical membrane pass occupies residues 386–406; it reads PVLFWVILVLVVVVGSSAFLL. Over 407-595 the chain is Cytoplasmic; sequence CHRRACRKRI…DPLPTAASGK (189 aa). A phosphoserine mark is found at serine 438 and serine 452. Disordered regions lie at residues 438–457, 485–509, and 536–595; these read SRPRRSSTQLRSGASVTEPV, LQDASPAGGPSSPRDLPEPRVSTEH, and EGRG…ASGK. Positions 443–452 are enriched in polar residues; it reads SSTQLRSGAS. Positions 499–509 are enriched in basic and acidic residues; that stretch reads DLPEPRVSTEH.

The protein belongs to the TNFR8 family. Interacts with TRAF1, TRAF2, TRAF3 and TRAF5. Phosphorylated on serine and tyrosine residues. Isoform 2 is constitutively phosphorylated. As to expression, detected in alveolar macrophages (at protein level).

The protein resides in the cell membrane. Its subcellular location is the cytoplasm. Functionally, receptor for TNFSF8/CD30L. May play a role in the regulation of cellular growth and transformation of activated lymphoblasts. Regulates gene expression through activation of NF-kappa-B. This Homo sapiens (Human) protein is Tumor necrosis factor receptor superfamily member 8.